Here is a 126-residue protein sequence, read N- to C-terminus: MPKASVVKIVVSDPKSGKAIQIETKEPQWLYGKKIGDTIDGSKIGLDGYELKITGGSDIAGFPMRKEVEGAVRKKIWWWVDKRMRVKKTVYGNTISDEIVQVNTVIVKYGEKPFEEIYNEFKSNKQ.

It belongs to the eukaryotic ribosomal protein eS6 family.

The protein is Small ribosomal subunit protein eS6 of Nanoarchaeum equitans (strain Kin4-M).